The following is a 296-amino-acid chain: 4-hydroxy-tetrahydrodipicolinate synthase (296 aa).

A pyruvate-binding site is contributed by Thr49. Tyr137 (proton donor/acceptor) is an active-site residue. Lys165 serves as the catalytic Schiff-base intermediate with substrate. Ile207 provides a ligand contact to pyruvate.

The protein belongs to the DapA family. In terms of assembly, homotetramer; dimer of dimers.

Its subcellular location is the cytoplasm. It catalyses the reaction L-aspartate 4-semialdehyde + pyruvate = (2S,4S)-4-hydroxy-2,3,4,5-tetrahydrodipicolinate + H2O + H(+). It functions in the pathway amino-acid biosynthesis; L-lysine biosynthesis via DAP pathway; (S)-tetrahydrodipicolinate from L-aspartate: step 3/4. Functionally, catalyzes the condensation of (S)-aspartate-beta-semialdehyde [(S)-ASA] and pyruvate to 4-hydroxy-tetrahydrodipicolinate (HTPA). The protein is 4-hydroxy-tetrahydrodipicolinate synthase of Afipia carboxidovorans (strain ATCC 49405 / DSM 1227 / KCTC 32145 / OM5) (Oligotropha carboxidovorans).